The sequence spans 230 residues: 5'-methylthioadenosine/S-adenosylhomocysteine nucleosidase (230 aa).

Residue glutamate 12 is the Proton acceptor of the active site. Substrate-binding positions include glycine 78, isoleucine 152, and 173–174 (ME). Residue aspartate 197 is the Proton donor of the active site.

The protein belongs to the PNP/UDP phosphorylase family. MtnN subfamily.

The enzyme catalyses S-adenosyl-L-homocysteine + H2O = S-(5-deoxy-D-ribos-5-yl)-L-homocysteine + adenine. It catalyses the reaction S-methyl-5'-thioadenosine + H2O = 5-(methylsulfanyl)-D-ribose + adenine. The catalysed reaction is 5'-deoxyadenosine + H2O = 5-deoxy-D-ribose + adenine. The protein operates within amino-acid biosynthesis; L-methionine biosynthesis via salvage pathway; S-methyl-5-thio-alpha-D-ribose 1-phosphate from S-methyl-5'-thioadenosine (hydrolase route): step 1/2. Functionally, catalyzes the irreversible cleavage of the glycosidic bond in both 5'-methylthioadenosine (MTA) and S-adenosylhomocysteine (SAH/AdoHcy) to adenine and the corresponding thioribose, 5'-methylthioribose and S-ribosylhomocysteine, respectively. Also cleaves 5'-deoxyadenosine, a toxic by-product of radical S-adenosylmethionine (SAM) enzymes, into 5-deoxyribose and adenine. This is 5'-methylthioadenosine/S-adenosylhomocysteine nucleosidase from Actinobacillus succinogenes (strain ATCC 55618 / DSM 22257 / CCUG 43843 / 130Z).